A 161-amino-acid chain; its full sequence is Cystatin cpi-2 (161 aa).

An N-terminal signal peptide occupies residues 1–25 (MMSTMSIKEGLLVILLSLFLFDTTA). The Important for interaction with host LGMN signature appears at 76–78 (SND). Asn-89 carries an N-linked (GlcNAc...) asparagine glycan. Positions 93–97 (QVVAG) match the Secondary area of contact motif. A disulfide bond links Cys-111 and Cys-124.

The protein belongs to the cystatin family.

Its function is as follows. Cysteine protease inhibitor which inhibits members of the peptidase C1 family. Also acts as an asparaginyl endopeptidase inhibitor. In the human host, inhibits CTSL/cathepsin L, CTSS/cathepsin S, CTSB/cathepsin B and asparaginyl endopeptidase LGMN/AEP which may cause defects in both antigen and MHC class II invariant chain CD74/Ii processing. This chain is Cystatin cpi-2, found in Brugia malayi (Filarial nematode worm).